We begin with the raw amino-acid sequence, 204 residues long: Small ribosomal subunit protein uS4 (204 aa).

The region spanning 93 to 156 (SRLSSVLYHS…AKIPVVVEAE (64 aa)) is the S4 RNA-binding domain.

This sequence belongs to the universal ribosomal protein uS4 family. In terms of assembly, part of the 30S ribosomal subunit. Contacts protein S5. The interaction surface between S4 and S5 is involved in control of translational fidelity.

Its function is as follows. One of the primary rRNA binding proteins, it binds directly to 16S rRNA where it nucleates assembly of the body of the 30S subunit. With S5 and S12 plays an important role in translational accuracy. The chain is Small ribosomal subunit protein uS4 from Wolbachia pipientis wMel.